The primary structure comprises 242 residues: Probable transcriptional regulatory protein Bcen2424_2294 (242 aa).

Belongs to the TACO1 family.

The protein resides in the cytoplasm. This Burkholderia cenocepacia (strain HI2424) protein is Probable transcriptional regulatory protein Bcen2424_2294.